We begin with the raw amino-acid sequence, 196 residues long: Ribonuclease H (196 aa).

One can recognise an RNase H type-1 domain in the interval 58 to 196; sequence LAKEEIIWES…GEIKADYGRK (139 aa). The Mg(2+) site is built by D71, E109, D132, and D192.

The protein belongs to the RNase H family. It depends on Mn(2+) as a cofactor. The cofactor is Mg(2+).

Its subcellular location is the cytoplasm. The enzyme catalyses Endonucleolytic cleavage to 5'-phosphomonoester.. Endonuclease that specifically degrades the RNA of RNA-DNA hybrids. This Halalkalibacterium halodurans (strain ATCC BAA-125 / DSM 18197 / FERM 7344 / JCM 9153 / C-125) (Bacillus halodurans) protein is Ribonuclease H (rnhA).